A 77-amino-acid chain; its full sequence is Large ribosomal subunit protein bL28 (77 aa).

Residues 1–20 (MSRVCQVTGKGPVTGNNISH) form a disordered region.

It belongs to the bacterial ribosomal protein bL28 family.

The protein is Large ribosomal subunit protein bL28 of Pseudomonas syringae pv. tomato (strain ATCC BAA-871 / DC3000).